The chain runs to 440 residues: Thymidine phosphorylase (440 aa).

It belongs to the thymidine/pyrimidine-nucleoside phosphorylase family. In terms of assembly, homodimer.

It catalyses the reaction thymidine + phosphate = 2-deoxy-alpha-D-ribose 1-phosphate + thymine. It functions in the pathway pyrimidine metabolism; dTMP biosynthesis via salvage pathway; dTMP from thymine: step 1/2. Its function is as follows. The enzymes which catalyze the reversible phosphorolysis of pyrimidine nucleosides are involved in the degradation of these compounds and in their utilization as carbon and energy sources, or in the rescue of pyrimidine bases for nucleotide synthesis. The protein is Thymidine phosphorylase of Salmonella heidelberg (strain SL476).